A 1023-amino-acid polypeptide reads, in one-letter code: NRPS-like oxidoreductase fscA (1023 aa).

An adenylation region spans residues 54–454; it reads TYGDLNGMAT…NHPFVRQCMV (401 aa). Residues 554–637 form the Carrier domain; that stretch reads PEDDVIGRQI…SIANHVRSAQ (84 aa). O-(pantetheine 4'-phosphoryl)serine is present on S596. In terms of domain architecture, Thioester reductase (TE) spans 685 to 901; it reads LTGGAGYLGQ…VYDESTTRAR (217 aa).

Belongs to the NRP synthetase family. Requires pantetheine 4'-phosphate as cofactor.

The protein operates within secondary metabolite biosynthesis. In terms of biological role, NRPS-like oxidoreductasee; part of the fragmented gene cluster that mediates the biosynthesis of fusarochromene, a tryptophan-derived metabolite closely related to a group of mycotoxins including fusarochromanone. Within the pathway, fscA acts as an oxidoreductase that reduces the carboxyl group of 4-hydroxykyrunenine to primary alcohol. The first step of the pathway is the epimerization of L-tryptophan to D-tryptophan in the presence of the NRPS-like tryptophan epimerase fscC. D-tryptophan is subsequently hydroxylated by the tryptophan 6-hydroxylase fscE to yield 6-hydroxytryptophan. The pyrrole ring undergoes cleavaged by the tryptophan 2,3-dioxygenase fscD and is finally converted to 4-hydroxykyrunenine by the hydrolase fscH. The NRPS-like oxidoreductase fscA reduces the carboxyl group to primary alcohol and the DMATS-type prenyltransferase fscG performs prenylation, followed by the formation of a chromene ring catalyzed by the oxidoreductase fscI, which leads to desacetylfusarochromene. Epoxidation by fscF and rearrangement reactions of chromene double bonds convert compound desacetylfusarochromene to fusarochromanones. Although specific acetyltransferases were not found near the fsc gene cluster, several predicted enzymes containing the N-acetyltransferase superfamily domain are present in the genome of F.equiseti. These predicted enzymes may have the potential to convert desacetylfusarochromene to fusarochromene. This chain is NRPS-like oxidoreductase fscA, found in Fusarium equiseti (Fusarium scirpi).